The chain runs to 404 residues: Glucose-1-phosphate adenylyltransferase (404 aa).

Alpha-D-glucose 1-phosphate-binding positions include Tyr99, Gly164, 179-180 (EK), and Ser197.

Belongs to the bacterial/plant glucose-1-phosphate adenylyltransferase family. In terms of assembly, homotetramer.

It catalyses the reaction alpha-D-glucose 1-phosphate + ATP + H(+) = ADP-alpha-D-glucose + diphosphate. The protein operates within glycan biosynthesis; glycogen biosynthesis. Its function is as follows. Involved in the biosynthesis of ADP-glucose, a building block required for the elongation reactions to produce glycogen. Catalyzes the reaction between ATP and alpha-D-glucose 1-phosphate (G1P) to produce pyrophosphate and ADP-Glc. This Rhodococcus jostii (strain RHA1) protein is Glucose-1-phosphate adenylyltransferase.